Here is a 94-residue protein sequence, read N- to C-terminus: Putative pterin-4-alpha-carbinolamine dehydratase (94 aa).

Belongs to the pterin-4-alpha-carbinolamine dehydratase family.

The enzyme catalyses (4aS,6R)-4a-hydroxy-L-erythro-5,6,7,8-tetrahydrobiopterin = (6R)-L-erythro-6,7-dihydrobiopterin + H2O. This is Putative pterin-4-alpha-carbinolamine dehydratase from Mycobacterium avium (strain 104).